The sequence spans 121 residues: MAEHNELGKAGENAAVAYLEEHGYLIRHRNWRKGHFELDIVAAKENELVIVEVKTRSNTLFAQPEEAVDLPKIKRTVRAADAYMKLFQIDVPVRFDIITVIGENGNFRIDHIKEAFYPPLF.

This sequence belongs to the UPF0102 family.

This Bacteroides thetaiotaomicron (strain ATCC 29148 / DSM 2079 / JCM 5827 / CCUG 10774 / NCTC 10582 / VPI-5482 / E50) protein is UPF0102 protein BT_2236.